Reading from the N-terminus, the 445-residue chain is Homoserine O-succinyltransferase (445 aa).

One can recognise an AB hydrolase-1 domain in the interval 45 to 411 (NAVLICHALS…APHGHDSFLF (367 aa)). S153 (nucleophile) is an active-site residue. Residue R223 coordinates substrate. Residues D373 and H406 contribute to the active site. D407 serves as a coordination point for substrate.

This sequence belongs to the AB hydrolase superfamily. MetX family. Homodimer.

The protein resides in the cytoplasm. It catalyses the reaction L-homoserine + succinyl-CoA = O-succinyl-L-homoserine + CoA. Its pathway is amino-acid biosynthesis; L-methionine biosynthesis via de novo pathway; O-succinyl-L-homoserine from L-homoserine: step 1/1. In terms of biological role, transfers a succinyl group from succinyl-CoA to L-homoserine, forming succinyl-L-homoserine. The sequence is that of Homoserine O-succinyltransferase from Psychrobacter arcticus (strain DSM 17307 / VKM B-2377 / 273-4).